Reading from the N-terminus, the 489-residue chain is Serotonin-gated chloride channel mod-1 (489 aa).

Positions 1–20 are cleaved as a signal peptide; that stretch reads MKFIPEITLLLLLFVHSTQA. The Extracellular portion of the chain corresponds to 21 to 240; sequence KGKRRKCPEG…VTFTFKRRYG (220 aa). N-linked (GlcNAc...) asparagine glycans are attached at residues N44, N103, and N144. Residues Y180 and W226 each contribute to the serotonin site. Helical transmembrane passes span 241-261, 274-294, and 304-324; these read FYII…WVSF, VGIS…KNLP, and VWML…AFVC. Residues 325–458 are Cytoplasmic-facing; the sequence is YISRCQNSVR…ARFHPEAVDK (134 aa). The segment at 365–398 is disordered; it reads GSVISHYHPTSNGNGNNNRHDTPQVTGRGSLHRN. Residues 372 to 391 show a composition bias toward polar residues; that stretch reads HPTSNGNGNNNRHDTPQVTG. A helical membrane pass occupies residues 459 to 479; the sequence is FSIVAFPLAFTMFNLVYWWHY.

The protein belongs to the ligand-gated ion channel (TC 1.A.9) family. In terms of tissue distribution, expressed in a subset of muscles, and head and tail neurons, including RME and GABAergic ventral nerve cord neurons. Expressed in AIY, RME, RID, RIF, ASI, DD1-6, and PVN neurons.

It localises to the membrane. The protein resides in the cell membrane. In terms of biological role, functions as a 5-hydroxytryptamine (serotonin) receptor. This receptor is a ligand-gated anion-specific ion channel, selective for chloride ions. Relays a long-range endocrine signal from the body cavity neurons to modulate distal adipose triglyceride lipase atgl-1 function, via the nuclear receptor nhr-76. Together with the G-protein coupled serotonin receptor ser-1 involved in male mating behavior. May mediate an inhibitory effect of serotonin on egg laying. Involved in regulating locomotory behavior, perhaps by modulating interneuronal signaling, acting in concert with G-protein coupled serotonin receptor ser-4. In the presence of food, plays a role in initiating and extending dwelling behavior, perhaps acting in AIY, RIF and ASI neurons, in opposition to neuropeptide PDF-mediated signaling. Plays a role in aversive learning upon exposure to pathogens such as Gram-negative bacterium P.aeruginosa strain PA14; perhaps acting in interneurons in response to serotonin released by the serotonergic ADF neurons. The polypeptide is Serotonin-gated chloride channel mod-1 (Caenorhabditis elegans).